The chain runs to 2211 residues: Norsolorinic acid synthase stcA (2211 aa).

Residues 11–251 (FLFGDQTYDF…REIPIYVPAH (241 aa)) form a starter unit:ACP transacylase (SAT) domain region. Residues 358–378 (PAEPPTSINKTPERYSHRPGS) form a disordered region. The span at 368–378 (TPERYSHRPGS) shows a compositional bias: basic and acidic residues. A Ketosynthase family 3 (KS3) domain is found at 380 to 812 (RGKLAIVSMS…GGNTAVLVED (433 aa)). Catalysis depends on for beta-ketoacyl synthase activity residues Cys-552, His-687, and His-730. Residues 912–1201 (IACSGQGSQY…MAGMIKTTLD (290 aa)) are malonyl-CoA:ACP transacylase (MAT) domain. Ser-1004 serves as the catalytic For acyl/malonyl transferase activity. Residues 1289-1316 (TATSDYQLPSDEQVAAKRPSKQDESKEA) are disordered. The tract at residues 1327 to 1468 (HRVVEEKTEP…CTVRFTSEAQ (142 aa)) is N-terminal hotdog fold. A PKS/mFAS DH domain is found at 1327-1643 (HRVVEEKTEP…LRRVPRRGLR (317 aa)). The interval 1340–1643 (TLVVETDISR…LRRVPRRGLR (304 aa)) is product template (PT) domain. The active-site Proton acceptor; for dehydratase activity is the His-1359. The C-terminal hotdog fold stretch occupies residues 1495–1643 (FIRYTTKSGY…LRRVPRRGLR (149 aa)). Asp-1555 functions as the Proton donor; for dehydratase activity in the catalytic mechanism. A disordered region spans residues 1655–1706 (RLHGNQQAVKTQAPQRAALKQKPQSSPTQPHASKVAYSRSATSPTAGKPVVA). Composition is skewed to polar residues over residues 1658 to 1668 (GNQQAVKTQAP) and 1676 to 1685 (KPQSSPTQPH). 2 Carrier domains span residues 1712 to 1791 (REGD…SGSA) and 1839 to 1915 (DELF…GTTS). O-(pantetheine 4'-phosphoryl)serine is present on residues Ser-1749 and Ser-1873. The span at 1912–1926 (GTTSGSTTGSSGSGS) shows a compositional bias: low complexity. The interval 1912–1947 (GTTSGSTTGSSGSGSSEDETDSIPSTPEEYTTADTR) is disordered. A compositionally biased stretch (polar residues) spans 1934-1945 (IPSTPEEYTTAD). Positions 1969-2205 (ILFMLPDGGG…KEHVYLVREL (237 aa)) are thioesterase/Claisen cyclase (TE/CLC) domain. Ser-2039 serves as the catalytic For thioesterase activity.

Pantetheine 4'-phosphate serves as cofactor.

It carries out the reaction hexanoyl-[ACP] + 7 malonyl-CoA + 6 H(+) = noranthrone + holo-[ACP] + 7 CO2 + 7 CoA + 2 H2O. It participates in mycotoxin biosynthesis; sterigmatocystin biosynthesis. In terms of biological role, non-reducing polyketide synthase; part of the gene cluster that mediates the biosynthesis of sterigmatocystin (ST), a polyketide-derived furanocoumarin which is part of the most toxic and carcinogenic compounds among the known mycotoxins. The first step in the biosynthesis of sterigmatocystin is the production of hexanoate by the fatty acid synthase (FAS) units stcJ and stcK. The polyketide backbone is assembled by the non-reducing polyketide synthase stcA by condensation of the starter hexanoyl-CoA and 7 malonyl-CoA extender units followed by cyclization and release of norsolorinic acid. Norsolorinic acid is the first stable intermediate in the biosynthesis of sterigmatocystin and is converted into averantin (AVN) by the ketoreductase stcE which reduces the hexanoate ketone to an alcohol. Averantin is then oxidized into 5'-hydroxyaverantin (HAVN) by the cytochrome P450 monooxygenase stcF. 5'-hydroxyaverantin is further converted to 5'-oxyaverantin (OAVN) by the 5'-hydroxyaverantin dehydrogenase stcG. The next step is the conversion of OAVN into averufin (AVF) which is catalyzed by a yet to be identified enzyme. The cytochrome P450 monooxygenase stcB and the flavin-binding monooxygenase stcW are both required for the conversion of averufin to 1-hydroxyversicolorone. The esterase stcI probably catalyzes the formation of versiconal hemiacetal acetate from 1-hydroxyversicolorone. The oxydoreductase stcN then probably catalyzes the biosynthetic step from versiconal to versicolorin B (VERB). The next step is performed by the versicolorin B desaturase stcL to produce versicolorin A (VERA). The ketoreductase stcU and the cytochrome P450 monooxygenase stcS are involved in the conversion of versicolorin A to demethylsterigmatocystin. The Baeyer-Villiger oxidas stcQ and the reductase stcR might be involved in the biosynthetic step from versicolorin A to demethylsterigmatocystin. The final step in the biosynthesis of sterigmatocystin is the methylation of demethylsterigmatocystin catalyzed by the methyltransferase stcP. In Emericella nidulans (strain FGSC A4 / ATCC 38163 / CBS 112.46 / NRRL 194 / M139) (Aspergillus nidulans), this protein is Norsolorinic acid synthase stcA.